We begin with the raw amino-acid sequence, 147 residues long: 3-dehydroquinate dehydratase (147 aa).

The active-site Proton acceptor is Tyr-24. Asn-75, His-81, and Asp-88 together coordinate substrate. Catalysis depends on His-101, which acts as the Proton donor. Residues 102 to 103 (IS) and Arg-112 contribute to the substrate site.

It belongs to the type-II 3-dehydroquinase family. In terms of assembly, homododecamer.

It catalyses the reaction 3-dehydroquinate = 3-dehydroshikimate + H2O. It participates in metabolic intermediate biosynthesis; chorismate biosynthesis; chorismate from D-erythrose 4-phosphate and phosphoenolpyruvate: step 3/7. In terms of biological role, catalyzes a trans-dehydration via an enolate intermediate. The chain is 3-dehydroquinate dehydratase from Cereibacter sphaeroides (strain KD131 / KCTC 12085) (Rhodobacter sphaeroides).